A 511-amino-acid chain; its full sequence is Histidine ammonia-lyase (511 aa).

Residues 142-144 (ASG) constitute a cross-link (5-imidazolinone (Ala-Gly)). Ser143 is subject to 2,3-didehydroalanine (Ser).

The protein belongs to the PAL/histidase family. In terms of processing, contains an active site 4-methylidene-imidazol-5-one (MIO), which is formed autocatalytically by cyclization and dehydration of residues Ala-Ser-Gly.

It is found in the cytoplasm. It catalyses the reaction L-histidine = trans-urocanate + NH4(+). The protein operates within amino-acid degradation; L-histidine degradation into L-glutamate; N-formimidoyl-L-glutamate from L-histidine: step 1/3. This chain is Histidine ammonia-lyase (hutH), found in Rhizobium meliloti (strain 1021) (Ensifer meliloti).